A 468-amino-acid polypeptide reads, in one-letter code: Glutamate--tRNA ligase (468 aa).

Residues 8–18 (PSPTGFLHVGG) carry the 'HIGH' region motif. Cys97, Cys99, Cys124, and Asp126 together coordinate Zn(2+). Positions 236 to 240 (KLSKR) match the 'KMSKS' region motif. Lys239 contributes to the ATP binding site.

Belongs to the class-I aminoacyl-tRNA synthetase family. Glutamate--tRNA ligase type 1 subfamily. Monomer. It depends on Zn(2+) as a cofactor.

Its subcellular location is the cytoplasm. The catalysed reaction is tRNA(Glu) + L-glutamate + ATP = L-glutamyl-tRNA(Glu) + AMP + diphosphate. Its function is as follows. Catalyzes the attachment of glutamate to tRNA(Glu) in a two-step reaction: glutamate is first activated by ATP to form Glu-AMP and then transferred to the acceptor end of tRNA(Glu). This is Glutamate--tRNA ligase from Francisella tularensis subsp. holarctica (strain FTNF002-00 / FTA).